Here is a 101-residue protein sequence, read N- to C-terminus: Signal recognition particle 19 kDa protein (101 aa).

Belongs to the SRP19 family. In terms of assembly, part of the signal recognition particle protein translocation system, which is composed of SRP and FtsY. Archaeal SRP consists of a 7S RNA molecule of 300 nucleotides and two protein subunits: SRP54 and SRP19.

The protein resides in the cytoplasm. In terms of biological role, involved in targeting and insertion of nascent membrane proteins into the cytoplasmic membrane. Binds directly to 7S RNA and mediates binding of the 54 kDa subunit of the SRP. This is Signal recognition particle 19 kDa protein from Methanosarcina barkeri (strain Fusaro / DSM 804).